The primary structure comprises 365 residues: Histidinol-phosphate aminotransferase (365 aa).

An N6-(pyridoxal phosphate)lysine modification is found at lysine 221.

It belongs to the class-II pyridoxal-phosphate-dependent aminotransferase family. Histidinol-phosphate aminotransferase subfamily. In terms of assembly, homodimer. Requires pyridoxal 5'-phosphate as cofactor.

The enzyme catalyses L-histidinol phosphate + 2-oxoglutarate = 3-(imidazol-4-yl)-2-oxopropyl phosphate + L-glutamate. It participates in amino-acid biosynthesis; L-histidine biosynthesis; L-histidine from 5-phospho-alpha-D-ribose 1-diphosphate: step 7/9. In Nitrobacter hamburgensis (strain DSM 10229 / NCIMB 13809 / X14), this protein is Histidinol-phosphate aminotransferase.